The sequence spans 267 residues: Serine/arginine-rich splicing factor 1 (267 aa).

The 76-residue stretch at 16-91 (CRIYVGNLPP…YRLRVEFPRS (76 aa)) folds into the RRM 1 domain. Disordered stretches follow at residues 90 to 137 (RSGR…PSRR) and 212 to 267 (KVDG…RSRT). A compositionally biased stretch (gly residues) spans 93–127 (RGAGGRGGGGGGGGGGGGGGGGGGGGGGGGGGGAP). An RRM 2 domain is found at 140–214 (YRVVVSGLPP…ETAYIRVKVD (75 aa)). Residues 224–267 (SRSRSRSRSRSRSRSNSRSRSYSPRRSRGSPRYSPRHSRSRSRT) are compositionally biased toward basic residues.

Belongs to the splicing factor SR family.

Its subcellular location is the cytoplasm. It is found in the nucleus speckle. May play a role in preventing exon skipping, ensuring the accuracy of splicing and regulating alternative splicing. This is Serine/arginine-rich splicing factor 1 (srsf1) from Xenopus tropicalis (Western clawed frog).